A 324-amino-acid chain; its full sequence is Adducin-related protein C1289.14 (324 aa).

Belongs to the aldolase class II family. Adducin subfamily.

This is Adducin-related protein C1289.14 from Schizosaccharomyces pombe (strain 972 / ATCC 24843) (Fission yeast).